Here is a 149-residue protein sequence, read N- to C-terminus: Large ribosomal subunit protein uL22 (149 aa).

The protein belongs to the universal ribosomal protein uL22 family. As to quaternary structure, part of the 50S ribosomal subunit.

Its function is as follows. This protein binds specifically to 23S rRNA; its binding is stimulated by other ribosomal proteins, e.g. L4, L17, and L20. It is important during the early stages of 50S assembly. It makes multiple contacts with different domains of the 23S rRNA in the assembled 50S subunit and ribosome. In terms of biological role, the globular domain of the protein is located near the polypeptide exit tunnel on the outside of the subunit, while an extended beta-hairpin is found that lines the wall of the exit tunnel in the center of the 70S ribosome. The chain is Large ribosomal subunit protein uL22 from Petrotoga mobilis (strain DSM 10674 / SJ95).